Here is a 1342-residue protein sequence, read N- to C-terminus: DNA-directed RNA polymerase subunit beta (1342 aa).

Belongs to the RNA polymerase beta chain family. As to quaternary structure, the RNAP catalytic core consists of 2 alpha, 1 beta, 1 beta' and 1 omega subunit. When a sigma factor is associated with the core the holoenzyme is formed, which can initiate transcription.

It catalyses the reaction RNA(n) + a ribonucleoside 5'-triphosphate = RNA(n+1) + diphosphate. Its function is as follows. DNA-dependent RNA polymerase catalyzes the transcription of DNA into RNA using the four ribonucleoside triphosphates as substrates. The polypeptide is DNA-directed RNA polymerase subunit beta (Vibrio vulnificus (strain CMCP6)).